A 481-amino-acid chain; its full sequence is Glutamate--tRNA ligase (481 aa).

The 'HIGH' region signature appears at 28–38 (PSPTGFLHLGG). The span at 139–148 (RYDGTWRPEP) shows a compositional bias: basic and acidic residues. The segment at 139–159 (RYDGTWRPEPGKTLPPVPADR) is disordered. The 'KMSKS' region signature appears at 260 to 264 (KLSKR). Lys-263 lines the ATP pocket.

It belongs to the class-I aminoacyl-tRNA synthetase family. Glutamate--tRNA ligase type 1 subfamily. In terms of assembly, monomer.

It localises to the cytoplasm. It carries out the reaction tRNA(Glu) + L-glutamate + ATP = L-glutamyl-tRNA(Glu) + AMP + diphosphate. Functionally, catalyzes the attachment of glutamate to tRNA(Glu) in a two-step reaction: glutamate is first activated by ATP to form Glu-AMP and then transferred to the acceptor end of tRNA(Glu). This Bordetella parapertussis (strain 12822 / ATCC BAA-587 / NCTC 13253) protein is Glutamate--tRNA ligase.